The sequence spans 367 residues: MEANGFGLQNFPELKNDTFLRAAWGEETDYTPVWCMRQAGRYLPEFRETRAAQDFFSTCRSPEACCELTLQPLRRFPLDAAIIFSDILVVPQALGMEVTMVPGKGPSFPEPLREERDLERLRDPAAAASELGYVFQAITLTRQRLAGRVPLIGFAGAPWTLMTYMVEGGSSSTMAQAKRWLYQRPQASHKLLGILTDVLVPYLIGQVAAGAQALQLFESHAGHLGTELFSKFALPYIRDVAKRVKAGLQKAGLAPVPMIIFAKDGHFALEELAQAGYEVVGLDWTVAPKKARERVGKAVTLQGNLDPCALYASEEEIGRLVQQMLDDFGPQRYIANLGHGLYPDMDPERVGAFVDAVHKHSRLLRQN.

Position 1 is an N-acetylmethionine (Met1). Coproporphyrinogen I-binding residues include Arg37, Ala39, Arg41, Arg50, Asp86, Tyr164, Ser219, and His339. Positions 37, 39, and 41 each coordinate coproporphyrinogen III. Asp86, Tyr164, Ser219, and His339 together coordinate coproporphyrinogen III.

This sequence belongs to the uroporphyrinogen decarboxylase family. In terms of assembly, homodimer.

Its subcellular location is the cytoplasm. It is found in the cytosol. It carries out the reaction uroporphyrinogen III + 4 H(+) = coproporphyrinogen III + 4 CO2. The enzyme catalyses uroporphyrinogen I + 4 H(+) = coproporphyrinogen I + 4 CO2. It participates in porphyrin-containing compound metabolism; protoporphyrin-IX biosynthesis; coproporphyrinogen-III from 5-aminolevulinate: step 4/4. In terms of biological role, catalyzes the sequential decarboxylation of the four acetate side chains of uroporphyrinogen to form coproporphyrinogen and participates in the fifth step in the heme biosynthetic pathway. Isomer I or isomer III of uroporphyrinogen may serve as substrate, but only coproporphyrinogen III can ultimately be converted to heme. In vitro also decarboxylates pentacarboxylate porphyrinogen I. This chain is Uroporphyrinogen decarboxylase, found in Mus musculus (Mouse).